The chain runs to 291 residues: MQRARPTLWAAALTLLVLLRGPPVARAGASSAGLGPVVRCEPCDARALAQCAPPPAVCAELVREPGCGCCLTCALSEGQPCGIYTERCGSGLRCQPSPDEARPLQALLDGRGLCVNASAVSRLRAYLLPAPPAPGNASESEEDRSAGSVESPSVSSTHRVSDPKFHPLHSKIIIIKKGHAKDSQRYKVDYESQSTDTQNFSSESKRETEYGPCRREMEDTLNHLKFLNVLSPRGVHIPNCDKKGFYKKKQCRPSKGRKRGFCWCVDKYGQPLPGYTTKGKEDVHCYSMQSK.

Residues Met-1–Ala-27 form the signal peptide. The interval Gly-28–Pro-134 is IGF-binding. The 82-residue stretch at Pro-36–Ala-117 folds into the IGFBP N-terminal domain. 6 cysteine pairs are disulfide-bonded: Cys-40/Cys-67, Cys-43/Cys-69, Cys-51/Cys-70, Cys-58/Cys-73, Cys-81/Cys-94, and Cys-88/Cys-114. 2 N-linked (GlcNAc...) (complex) asparagine glycosylation sites follow: Asn-116 and Asn-136. Disordered regions lie at residues Ala-130–Asp-162 and Asp-189–Gly-211. A compositionally biased stretch (low complexity) spans Ala-146–Ser-156. At Ser-148 the chain carries Phosphoserine; by FAM20C. The span at Glu-191–Ser-202 shows a compositional bias: polar residues. Position 194 is a phosphoserine; by CK2 (Ser-194). An N-linked (GlcNAc...) (complex) asparagine glycan is attached at Asn-199. Ser-201 bears the Phosphoserine; by FAM20C mark. Phosphoserine; by CK2 is present on Ser-202. The Thyroglobulin type-1 domain occupies Tyr-210–Cys-285. Intrachain disulfides connect Cys-213–Cys-240, Cys-251–Cys-262, and Cys-264–Cys-285.

As to quaternary structure, interacts with XLKD1. Binds IGF2 more than IGF1. Forms a ternary complex of about 140 to 150 kDa with IGF1 or IGF2 and a 85 kDa glycoprotein (ALS). Interacts with humanin; humanin competes with importin KPNB1 for binding to IGFBP3, blocking IGFBP3 nuclear import and IGFBP3-mediated apoptosis. Interacts with TMEM219. Interacts with RXRA; this interaction modulates the transcriptional activity of RXRA. Interacts with LRP1; this interaction mediates cell growth inhibition independent of IGF1. In terms of processing, phosphorylated by FAM20C in the extracellular medium. Phosphorylated by CK2; resulting in decreased nuclear localization. In terms of tissue distribution, expressed by most tissues. Present in plasma.

It localises to the secreted. Its subcellular location is the nucleus. Functionally, multifunctional protein that plays a critical role in regulating the availability of IGFs such as IGF1 and IGF2 to their receptors and thereby regulates IGF-mediated cellular processes including proliferation, differentiation, and apoptosis in a cell-type specific manner. Also exhibits IGF-independent antiproliferative and apoptotic effects mediated by its receptor TMEM219/IGFBP-3R. Inhibits the positive effect of humanin on insulin sensitivity. Promotes testicular germ cell apoptosis. Acts via LRP-1/alpha2M receptor, also known as TGF-beta type V receptor, to mediate cell growth inhibition independent of IGF1. Mechanistically, induces serine-specific dephosphorylation of IRS1 or IRS2 upon ligation to its receptor, leading to the inhibitory cascade. In the nucleus, interacts with transcription factors such as retinoid X receptor-alpha/RXRA to regulate transcriptional signaling and apoptosis. This is Insulin-like growth factor-binding protein 3 (IGFBP3) from Homo sapiens (Human).